The sequence spans 297 residues: MDGDGDPESVGQPEEASPEEQQEEACAEEANGGEERPEDDGEGEAAYLDELPEPLLLRVLAELPAAQLVQACRLVCLRWKELVDGAPLWLLKCQQEGLVPQDGPEDERDHWQQFYFLSKRRRNLLRNPCGEEDLEGWCDVEHGGDGWRVEELPGDCGVEFIHDESVKKYFASSFEWCRKAQIIDLQAEGYWEELLDTTQPAIVVKDWYSGRRDAGCLYELTVKLLSEHEDVLAEFNSGQVAVPADSDDGGWTEISHTFTDYGPGVRFIRFEHGGQDCVYWKGWFGARVTNSSVWVEP.

Residues 1–42 are disordered; sequence MDGDGDPESVGQPEEASPEEQQEEACAEEANGGEERPEDDGE. A compositionally biased stretch (acidic residues) spans 16 to 27; it reads ASPEEQQEEACA. An F-box domain is found at 45 to 92; it reads AAYLDELPEPLLLRVLAELPAAQLVQACRLVCLRWKELVDGAPLWLLK. An FBA domain is found at 114–297; sequence FYFLSKRRRN…VTNSSVWVEP (184 aa). Residues 211 to 213 and 279 to 280 each bind a carbohydrate; these read RRD and YW.

In terms of assembly, component of the SCF(FBXO2) complex consisting of CUL1, RBX1, SKP1 and FBXO2. Predominantly detected as heterodimer with SKP1; the heterodimer with SKP1 is not part of the SCF(FBXO2) complex.

The protein localises to the cytoplasm. Its subcellular location is the microsome membrane. It participates in protein modification; protein ubiquitination. Functionally, substrate recognition component of a SCF (SKP1-CUL1-F-box protein) E3 ubiquitin-protein ligase complex that mediates the ubiquitination and subsequent proteasomal degradation of target proteins. Involved in the endoplasmic reticulum-associated degradation pathway (ERAD) for misfolded lumenal proteins by recognizing and binding sugar chains on unfolded glycoproteins that are retrotranslocated into the cytosol and promoting their ubiquitination and subsequent degradation. Prevents formation of cytosolic aggregates of unfolded glycoproteins that have been retrotranslocated into the cytosol. Able to recognize and bind denatured glycoproteins, preferentially those of the high-mannose type. This Bos taurus (Bovine) protein is F-box only protein 2 (FBXO2).